The following is a 776-amino-acid chain: Homoaconitase, mitochondrial (776 aa).

Residues 1 to 38 (MQSRLVSQSGLGRRWAVLRCALSKTYQRRTLTSTRRQF) constitute a mitochondrion transit peptide. Positions 394, 463, and 466 each coordinate [4Fe-4S] cluster.

Belongs to the aconitase/IPM isomerase family. The cofactor is [4Fe-4S] cluster.

It localises to the mitochondrion. The enzyme catalyses (2R,3S)-homoisocitrate = cis-homoaconitate + H2O. It functions in the pathway amino-acid biosynthesis; L-lysine biosynthesis via AAA pathway; L-alpha-aminoadipate from 2-oxoglutarate: step 3/5. Catalyzes the reversible hydration of cis-homoaconitate to (2R,3S)-homoisocitrate, a step in the alpha-aminoadipate pathway for lysine biosynthesis. This Emericella nidulans (strain FGSC A4 / ATCC 38163 / CBS 112.46 / NRRL 194 / M139) (Aspergillus nidulans) protein is Homoaconitase, mitochondrial (lys4).